A 171-amino-acid polypeptide reads, in one-letter code: 2-vinyl bacteriochlorophyllide hydratase (171 aa).

It functions in the pathway porphyrin-containing compound metabolism; bacteriochlorophyll biosynthesis (light-independent). The polypeptide is 2-vinyl bacteriochlorophyllide hydratase (bchF) (Rhodobacter capsulatus (strain ATCC BAA-309 / NBRC 16581 / SB1003)).